A 480-amino-acid polypeptide reads, in one-letter code: UDP-N-acetylmuramate--L-alanine ligase (480 aa).

126–132 (GTHGKTT) serves as a coordination point for ATP.

Belongs to the MurCDEF family.

Its subcellular location is the cytoplasm. The enzyme catalyses UDP-N-acetyl-alpha-D-muramate + L-alanine + ATP = UDP-N-acetyl-alpha-D-muramoyl-L-alanine + ADP + phosphate + H(+). It functions in the pathway cell wall biogenesis; peptidoglycan biosynthesis. Cell wall formation. This is UDP-N-acetylmuramate--L-alanine ligase from Blochmanniella pennsylvanica (strain BPEN).